The chain runs to 212 residues: MSTLSVVIKDITPEQVAIISQGLVAGVDEVGRGPLIGDVVTAAVILDPNKPIVGLNDSKKLSEKRRNALYQQIMDNALSVSVGRASPAEIDELNILHATMLAMQRAVAGLSILPERVLVDGNRVPDFGIASHAIIKGDGLVAAISAASIIAKVTRDAEMDTLDSQYPQYGFAKHKGYPTKAHFEALALYGVLPDHRKSFKPVADRILLQNTF.

An RNase H type-2 domain is found at 22–211 (GLVAGVDEVG…VADRILLQNT (190 aa)). A divalent metal cation is bound by residues Asp28, Glu29, and Asp120.

This sequence belongs to the RNase HII family. The cofactor is Mn(2+). It depends on Mg(2+) as a cofactor.

The protein localises to the cytoplasm. The catalysed reaction is Endonucleolytic cleavage to 5'-phosphomonoester.. Endonuclease that specifically degrades the RNA of RNA-DNA hybrids. The polypeptide is Ribonuclease HII (Shewanella frigidimarina (strain NCIMB 400)).